Reading from the N-terminus, the 2326-residue chain is Probable voltage-dependent N-type calcium channel subunit alpha-1B (2326 aa).

Over 1 to 83 (MARLGNDVPA…DNIIRKYAKR (83 aa)) the chain is Cytoplasmic. Residues 17-37 (AGGGRGANRHAGPQAGQRGMY) form a disordered region. Residues 75-351 (NIIRKYAKRI…LVLGVLSGEF (277 aa)) form an I repeat. The chain crosses the membrane as a helical span at residues 84–107 (ITEWPPFEYMILATIIANCIVLAL). At 108–124 (EQHLPDGDKTPMSERLD) the chain is on the extracellular side. Residues 125–145 (DTEPYFIGIFCFEAGIKIIAL) form a helical membrane-spanning segment. The Cytoplasmic portion of the chain corresponds to 146–156 (GFAFHKGSYLR). The helical transmembrane segment at 157–175 (NGWNVMDFVVVLTGILTTI) threads the bilayer. Over 176 to 180 (GTDFD) the chain is Extracellular. Residues 181-204 (LRTLRAVRVLRPLKLVSGIPSLQV) form a helical membrane-spanning segment. Residues 205–214 (VLKSIMKAMV) are Cytoplasmic-facing. The helical transmembrane segment at 215-237 (PLLQIGLLLFFAILMFAIIGLEF) threads the bilayer. Residues 238 to 323 (YMGKFHKTCF…TANDALGNTW (86 aa)) are Extracellular-facing. An N-linked (GlcNAc...) asparagine glycan is attached at Asn-271. Residues 324–348 (NWLYFIPLIVIGSFFMLNLVLGVLS) form a helical membrane-spanning segment. The Cytoplasmic portion of the chain corresponds to 349–472 (GEFAKERERV…FFIRRMVKSQ (124 aa)). A binding to the beta subunit region spans residues 371–388 (QQVEQEFNRYLRWIHIAE). Residues 458-702 (EKRFRFFIRR…VFLAIAVDNL (245 aa)) form an II repeat. A helical membrane pass occupies residues 473-491 (SFYWIVLCLVGLNTLCVAI). The Extracellular segment spans residues 492–501 (VHYDQPPLLT). The chain crosses the membrane as a helical span at residues 502 to 524 (DALYFAEFVFLGLFLTEMSLKMY). At 525–534 (GLGPRNYFHS) the chain is on the cytoplasmic side. Ser-534 is an a 1,2-diacyl-sn-glycero-3-phospho-(1D-myo-inositol-4,5-bisphosphate) binding site. The helical transmembrane segment at 535 to 556 (SFNCFDFGVIVGSIFEVVWTAV) threads the bilayer. The Extracellular portion of the chain corresponds to 557-563 (KPDTSFG). A helical membrane pass occupies residues 564–576 (ISVLRALRLLRIF). Residues Arg-574 and Lys-577 each contribute to the a 1,2-diacyl-sn-glycero-3-phospho-(1D-myo-inositol-4,5-bisphosphate) site. At 577–594 (KVTKYWNSLRNLVVSLLN) the chain is on the cytoplasmic side. A helical membrane pass occupies residues 595 to 620 (SMKSIISLLFLLFLFIVVFALLGMQL). The Extracellular segment spans residues 621-672 (FGGQFNFEDGTPPTNFDTFPAAILTVFQILTGEDWNEVMYYGIEAHGGVKKG). The chain crosses the membrane as a helical span at residues 673 to 699 (MFSSVYFIILTLFGNYTLLNVFLAIAV). Residues 700–1148 (DNLANAQELT…ACHYIVNLRY (449 aa)) are Cytoplasmic-facing. A disordered region spans residues 793 to 1048 (SHQIRPDMKT…LQHLPQQPED (256 aa)). Composition is skewed to basic and acidic residues over residues 796–808 (IRPD…DRPL), 854–879 (KLGE…DDKR), 886–908 (SKET…SHEG), 935–979 (HGTE…EGAE), and 994–1011 (SEEK…VLRE). Over residues 1020–1032 (TQPSQDSGTQGNV) the composition is skewed to polar residues. The III repeat unit spans residues 1134 to 1416 (NPVRRACHYI…IFVALIIITF (283 aa)). Residues 1149-1167 (FEMCILLVITMSSIALAAE) traverse the membrane as a helical segment. Topologically, residues 1168-1175 (DPVQGDAP) are extracellular. Residues 1176–1200 (RNNVLKYLDYVFTGVFTFEMVIKMI) traverse the membrane as a helical segment. Over 1201-1214 (NLGLILHPGSYFRD) the chain is Cytoplasmic. The chain crosses the membrane as a helical span at residues 1215-1235 (LWNILDFIVVSGALVAFAFTG). The Extracellular portion of the chain corresponds to 1236 to 1241 (SRGKDL). The chain crosses the membrane as a helical span at residues 1242 to 1262 (NTIKSLRVLRVLRPLKTIKRL). Residues 1263 to 1280 (PKLKAVFDCVVNSLKNVL) are Cytoplasmic-facing. A helical membrane pass occupies residues 1281-1300 (NILIVYMLFMFIFAVIAVQL). The Extracellular segment spans residues 1301 to 1387 (FKGKFFYCTD…DQGPSPSYRM (87 aa)). The helical transmembrane segment at 1388 to 1413 (EMSIFYVVYFVVFPFFFVNIFVALII) threads the bilayer. Residues 1414-1468 (ITFQEQGDKVMSDCSLEKNERACIDFAISAKPLTRYMPQNKQTFQYKMWKFVVSP) lie on the Cytoplasmic side of the membrane. The stretch at 1453–1708 (NKQTFQYKMW…LFVAVIMDNF (256 aa)) is one IV repeat. A helical membrane pass occupies residues 1469–1487 (PFEYLIMALIALNTIVLMM). Over 1488–1495 (KFYNAPDP) the chain is Extracellular. The chain crosses the membrane as a helical span at residues 1496-1520 (YDRMLQYLNILFTFLFSMECVLKLI). The Cytoplasmic segment spans residues 1521 to 1530 (GFGVLNYFRD). A helical transmembrane segment spans residues 1531-1552 (AWNVFDFVTVLGSITDILVTEL). At 1553–1558 (ADSFIN) the chain is on the extracellular side. Asn-1558 is a glycosylation site (N-linked (GlcNAc...) asparagine). A helical membrane pass occupies residues 1559 to 1577 (LSFLRLFRAARLIKLLRQG). At 1578 to 1596 (YTIRILLWTFVQSFKALPY) the chain is on the cytoplasmic side. A helical transmembrane segment spans residues 1597–1616 (VCLLIAMLFFIYAIIGMQVF). At 1617–1680 (GNIELDDDGA…IDGDECGSNF (64 aa)) the chain is on the extracellular side. Residues 1681–1704 (AYFYFVSFIFFSSFLMLNLFVAVI) form a helical membrane-spanning segment. Residues 1705-2326 (MDNFEYLTRD…YRETDEDDWC (622 aa)) are Cytoplasmic-facing. The EF-hand domain maps to 1721–1756 (HHLDEFIRVWAEYDPGARGRITYNDMYEMLRHMCPP). 3 residues coordinate Ca(2+): Asp-1734, Arg-1740, and Asp-1745. Over residues 1897–1912 (EEPSSYSTSHKNSVNP) the composition is skewed to polar residues. Disordered regions lie at residues 1897–1916 (EEPS…LYQG), 1932–1954 (CAEG…KSSS), 2039–2242 (PHHH…SSDP), and 2271–2326 (TTAT…DDWC). Basic and acidic residues predominate over residues 1932-1948 (CAEGKKEVPESHPEEAG). Basic residues predominate over residues 2039–2055 (PHHHHHHHRCHHRREKK). Composition is skewed to basic and acidic residues over residues 2056–2069 (QRSL…HADE) and 2077–2104 (QLRD…EKQR). Composition is skewed to polar residues over residues 2142–2161 (GSGS…STPS), 2275–2289 (GRSP…QPPQ), and 2302–2311 (GRSTGPSTAA).

It belongs to the calcium channel alpha-1 subunit (TC 1.A.1.11) family. In terms of assembly, multisubunit complex consisting of alpha-1, alpha-2, beta and delta subunits in a 1:1:1:1 ratio. The channel activity is directed by the pore-forming and voltage-sensitive alpha-1 subunit. In many cases, this subunit is sufficient to generate voltage-sensitive calcium channel activity. The auxiliary subunits beta and alpha-2/delta linked by a disulfide bridge regulate the channel activity. Phosphorylated in vitro by CaM-kinase II, PKA, PKC and CGPK. In terms of tissue distribution, expression is higher in the electric lobe than in the forebrain.

The protein localises to the membrane. Its function is as follows. The isoform alpha-1B gives rise to N-type calcium currents. N-type calcium channels belong to the 'high-voltage activated' (HVA) group. The chain is Probable voltage-dependent N-type calcium channel subunit alpha-1B from Diplobatis ommata (Ocellated electric ray).